Here is a 511-residue protein sequence, read N- to C-terminus: Maturase K (511 aa).

The protein belongs to the intron maturase 2 family. MatK subfamily.

Its subcellular location is the plastid. It is found in the chloroplast. Usually encoded in the trnK tRNA gene intron. Probably assists in splicing its own and other chloroplast group II introns. The polypeptide is Maturase K (Poa pratensis (Kentucky bluegrass)).